Consider the following 333-residue polypeptide: Foldase protein PrsA (333 aa).

The signal sequence occupies residues 1–22; it reads MKKSTKLLAGIVTLASAMTLAA. Cys23 is lipidated: N-palmitoyl cysteine. Cys23 carries S-diacylglycerol cysteine lipidation. The 96-residue stretch at 145-240 folds into the PpiC domain; sequence TPEMTTQVIT…NKFYIVKVTK (96 aa). The segment at 301–333 is disordered; sequence DKKASKANTSKSDQKTSSDSSKDSQSSKSKSEK. Residues 312–322 show a composition bias toward basic and acidic residues; the sequence is SDQKTSSDSSK. Over residues 323 to 333 the composition is skewed to low complexity; the sequence is DSQSSKSKSEK.

Belongs to the PrsA family.

The protein resides in the cell membrane. It catalyses the reaction [protein]-peptidylproline (omega=180) = [protein]-peptidylproline (omega=0). Plays a major role in protein secretion by helping the post-translocational extracellular folding of several secreted proteins. This is Foldase protein PrsA from Streptococcus equi subsp. zooepidemicus (strain MGCS10565).